A 125-amino-acid chain; its full sequence is Large-conductance mechanosensitive channel (125 aa).

The next 2 membrane-spanning stretches (helical) occupy residues 14–34 (VIDL…VQSL) and 67–87 (GSFL…FLIV).

It belongs to the MscL family. In terms of assembly, homopentamer.

It is found in the cell membrane. In terms of biological role, channel that opens in response to stretch forces in the membrane lipid bilayer. May participate in the regulation of osmotic pressure changes within the cell. In Lactobacillus helveticus (strain DPC 4571), this protein is Large-conductance mechanosensitive channel.